The sequence spans 467 residues: UDP-N-acetylmuramate--L-alanine ligase (467 aa).

Residue Gly-123–Thr-129 participates in ATP binding.

It belongs to the MurCDEF family.

The protein resides in the cytoplasm. It carries out the reaction UDP-N-acetyl-alpha-D-muramate + L-alanine + ATP = UDP-N-acetyl-alpha-D-muramoyl-L-alanine + ADP + phosphate + H(+). It participates in cell wall biogenesis; peptidoglycan biosynthesis. In terms of biological role, cell wall formation. This Arthrobacter sp. (strain FB24) protein is UDP-N-acetylmuramate--L-alanine ligase.